A 364-amino-acid chain; its full sequence is Photoreceptor outer segment membrane glycoprotein 2 (364 aa).

Over 1 to 24 the chain is Cytoplasmic; that stretch reads MTVLKVKFTKTKRDKLAQILWILN. A helical transmembrane segment spans residues 25-43; sequence WVSVVSGIILFSLGLFLKI. Topologically, residues 44 to 61 are lumenal; it reads EIKKRNEVMAKGDINSVP. A helical transmembrane segment spans residues 62–80; it reads NMLISVGVIACVVNFLGGK. Over 81–99 the chain is Cytoplasmic; sequence ICYDCSDANKFSRWKLIML. The chain crosses the membrane as a helical span at residues 100 to 123; it reads PYIICTFCFTFCILLGALMCYTMR. Over 124 to 264 the chain is Lumenal; it reads NELEESLYLG…LEYYTAIMRS (141 aa). Asn-229 is a glycosylation site (N-linked (GlcNAc...) asparagine). Residues 265 to 290 traverse the membrane as a helical segment; it reads IGIAALLIWLFELSVLIGVRYLQTAM. Residues 291-364 are Cytoplasmic-facing; the sequence is KNVLLQGDLQ…VTAKSIPAAS (74 aa).

This sequence belongs to the PRPH2/ROM1 family.

The protein localises to the membrane. The protein is Photoreceptor outer segment membrane glycoprotein 2 of Gallus gallus (Chicken).